A 692-amino-acid chain; its full sequence is Chaperone protein dnaK1 (692 aa).

The residue at position 197 (Thr197) is a Phosphothreonine; by autocatalysis.

This sequence belongs to the heat shock protein 70 family.

Acts as a chaperone. This is Chaperone protein dnaK1 (dnaK1) from Synechocystis sp. (strain ATCC 27184 / PCC 6803 / Kazusa).